The sequence spans 533 residues: Dipeptidase (533 aa).

Cys3 is a catalytic residue.

Belongs to the peptidase C69 family.

It catalyses the reaction an L-aminoacyl-L-amino acid + H2O = 2 an L-alpha-amino acid. In terms of biological role, hydrolyzes a wide range of dipeptides. Highest activity against Ala-Gln. The chain is Dipeptidase from Bifidobacterium longum (strain NCC 2705).